The chain runs to 237 residues: Aliphatic sulfonates import ATP-binding protein SsuB 1 (237 aa).

The region spanning 5–221 (LMDIRVEHKA…PRDRRDPLLA (217 aa)) is the ABC transporter domain. 38–45 (GPSGCGKS) is a binding site for ATP.

It belongs to the ABC transporter superfamily. Aliphatic sulfonates importer (TC 3.A.1.17.2) family. The complex is composed of two ATP-binding proteins (SsuB), two transmembrane proteins (SsuC) and a solute-binding protein (SsuA).

Its subcellular location is the cell inner membrane. It carries out the reaction ATP + H2O + aliphatic sulfonate-[sulfonate-binding protein]Side 1 = ADP + phosphate + aliphatic sulfonateSide 2 + [sulfonate-binding protein]Side 1.. In terms of biological role, part of the ABC transporter complex SsuABC involved in aliphatic sulfonates import. Responsible for energy coupling to the transport system. This is Aliphatic sulfonates import ATP-binding protein SsuB 1 from Pseudomonas syringae pv. syringae (strain B728a).